The primary structure comprises 266 residues: uncharacterized protein (266 aa).

7 helical membrane passes run 25-45 (LPSL…GYLL), 64-84 (IGAA…AELI), 111-131 (IVTI…GHLV), 158-178 (VLIS…LSFG), 186-206 (ILGI…HVVA), 209-229 (FVIP…IGNI), and 230-250 (IPAF…IYFI).

It belongs to the FNT transporter (TC 1.A.16) family.

Its subcellular location is the cell membrane. This is an uncharacterized protein from Bacillus subtilis (strain 168).